The chain runs to 307 residues: ATP-dependent (S)-NAD(P)H-hydrate dehydratase (307 aa).

In terms of domain architecture, YjeF C-terminal spans 1–291 (MDHFIKLLPK…DEIPKLVRDV (291 aa)). Residues G96 and 150–156 (NIVEFSR) contribute to the (6S)-NADPHX site. ATP contacts are provided by residues 194–198 (KGEVD) and 214–223 (SSLRRCGGQG). Residue D224 coordinates (6S)-NADPHX.

It belongs to the NnrD/CARKD family. It depends on Mg(2+) as a cofactor.

It catalyses the reaction (6S)-NADHX + ATP = ADP + phosphate + NADH + H(+). The catalysed reaction is (6S)-NADPHX + ATP = ADP + phosphate + NADPH + H(+). Functionally, catalyzes the dehydration of the S-form of NAD(P)HX at the expense of ATP, which is converted to ADP. Together with NAD(P)HX epimerase, which catalyzes the epimerization of the S- and R-forms, the enzyme allows the repair of both epimers of NAD(P)HX, a damaged form of NAD(P)H that is a result of enzymatic or heat-dependent hydration. This chain is ATP-dependent (S)-NAD(P)H-hydrate dehydratase, found in Caenorhabditis elegans.